We begin with the raw amino-acid sequence, 1311 residues long: AF4/FMR2 family member 2 (1311 aa).

Disordered regions lie at residues Leu94–Asp187, Pro204–Ala229, and Thr377–Val417. Polar residues predominate over residues Ser101–Glu111. Residues Ser155–His164 are compositionally biased toward basic and acidic residues. Residues Asn165–Asp187 are compositionally biased toward polar residues. 2 stretches are compositionally biased toward polar residues: residues Thr377 to Leu396 and Gln403 to Val417. Ser430 carries the post-translational modification Phosphoserine. 4 disordered regions span residues Lys457 to Leu530, Thr574 to Glu726, Ser818 to Lys867, and Pro881 to Ile943. The segment covering Val465–Ala477 has biased composition (pro residues). The span at Val478–Glu491 shows a compositional bias: low complexity. Residue Thr517 is modified to Phosphothreonine. Over residues Glu582 to Arg597 the composition is skewed to basic and acidic residues. Over residues Ser615 to Thr625 the composition is skewed to polar residues. The span at Pro655–Arg668 shows a compositional bias: basic and acidic residues. The segment covering Gly669–Ala679 has biased composition (basic residues). The segment covering Pro857–Lys867 has biased composition (basic and acidic residues). Pro residues-rich tracts occupy residues Cys883–Pro892 and Phe913–Glu922.

It belongs to the AF4 family. As to expression, brain (most abundant in hippocampus and amygdala), placenta and lung.

It localises to the nucleus speckle. Its function is as follows. RNA-binding protein. Might be involved in alternative splicing regulation through an interaction with G-quartet RNA structure. The polypeptide is AF4/FMR2 family member 2 (Homo sapiens (Human)).